Reading from the N-terminus, the 384-residue chain is 8-amino-7-oxononanoate synthase (384 aa).

R23 contributes to the substrate binding site. Residue 110 to 111 participates in pyridoxal 5'-phosphate binding; sequence GF. Substrate is bound at residue H135. Residues S179, H206, and T232 each contribute to the pyridoxal 5'-phosphate site. An N6-(pyridoxal phosphate)lysine modification is found at K235. A substrate-binding site is contributed by T348.

The protein belongs to the class-II pyridoxal-phosphate-dependent aminotransferase family. BioF subfamily. As to quaternary structure, homodimer. Pyridoxal 5'-phosphate is required as a cofactor.

It carries out the reaction 6-carboxyhexanoyl-[ACP] + L-alanine + H(+) = (8S)-8-amino-7-oxononanoate + holo-[ACP] + CO2. It functions in the pathway cofactor biosynthesis; biotin biosynthesis. In terms of biological role, catalyzes the decarboxylative condensation of pimeloyl-[acyl-carrier protein] and L-alanine to produce 8-amino-7-oxononanoate (AON), [acyl-carrier protein], and carbon dioxide. The chain is 8-amino-7-oxononanoate synthase from Vibrio cholerae serotype O1 (strain ATCC 39315 / El Tor Inaba N16961).